Consider the following 203-residue polypeptide: Ras-like protein family member 10A (203 aa).

The small GTPase-like stretch occupies residues 1–203; that stretch reads MGGSLRVAVL…ALHPARCSLM (203 aa). 11–18 contacts GTP; sequence GAPGVGKT. Positions 33–42 match the Effector region motif; the sequence is HRPTDSPCLY. Residues 59-62 and 129-132 contribute to the GTP site; these read DGDV and NKRD. Cysteine 200 is modified (cysteine methyl ester). The S-farnesyl cysteine moiety is linked to residue cysteine 200. Residues 201–203 constitute a propeptide, removed in mature form; sequence SLM.

This sequence belongs to the small GTPase superfamily. Ras family. Post-translationally, isoprenylation is essential for nucleolar localization, and the proliferation-inhibiting activity of RASL10A.

The protein resides in the cell membrane. It is found in the nucleus. Its subcellular location is the nucleolus. It catalyses the reaction GTP + H2O = GDP + phosphate + H(+). Functionally, potent inhibitor of cellular proliferation. This chain is Ras-like protein family member 10A (Rasl10a), found in Mus musculus (Mouse).